Here is an 880-residue protein sequence, read N- to C-terminus: Alanine--tRNA ligase (880 aa).

Zn(2+) contacts are provided by His-567, His-571, Cys-669, and His-673.

The protein belongs to the class-II aminoacyl-tRNA synthetase family. Requires Zn(2+) as cofactor.

It is found in the cytoplasm. It catalyses the reaction tRNA(Ala) + L-alanine + ATP = L-alanyl-tRNA(Ala) + AMP + diphosphate. Its function is as follows. Catalyzes the attachment of alanine to tRNA(Ala) in a two-step reaction: alanine is first activated by ATP to form Ala-AMP and then transferred to the acceptor end of tRNA(Ala). Also edits incorrectly charged Ser-tRNA(Ala) and Gly-tRNA(Ala) via its editing domain. This chain is Alanine--tRNA ligase, found in Bacillus cereus (strain ZK / E33L).